A 294-amino-acid polypeptide reads, in one-letter code: Sulfotransferase 1E1 (294 aa).

A 3'-phosphoadenylyl sulfate-binding site is contributed by 47-52; sequence KSGTTW. Substrate is bound at residue 105 to 107; that stretch reads KTH. The Proton acceptor role is filled by H107. Residues R129, S137, Y192, 226 to 231, and 256 to 258 contribute to the 3'-phosphoadenylyl sulfate site; these read TSFQEM and RKG.

This sequence belongs to the sulfotransferase 1 family. Homodimer. Liver, intestine and at lower level in the kidney.

The protein localises to the cytoplasm. Its subcellular location is the cytosol. The catalysed reaction is estrone + 3'-phosphoadenylyl sulfate = estrone 3-sulfate + adenosine 3',5'-bisphosphate + H(+). It carries out the reaction (24S)-hydroxycholesterol + 3'-phosphoadenylyl sulfate = (24S)-hydroxycholesterol 3-sulfate + adenosine 3',5'-bisphosphate + H(+). It catalyses the reaction 17beta-estradiol + 3'-phosphoadenylyl sulfate = 17beta-estradiol 3-sulfate + adenosine 3',5'-bisphosphate + H(+). The enzyme catalyses 3beta-hydroxyandrost-5-en-17-one + 3'-phosphoadenylyl sulfate = dehydroepiandrosterone 3-sulfate + adenosine 3',5'-bisphosphate + H(+). The catalysed reaction is 4-ethylphenol + 3'-phosphoadenylyl sulfate = 4-ethylphenyl sulfate + adenosine 3',5'-bisphosphate + H(+). With respect to regulation, inhibited by estradiol. Its function is as follows. Sulfotransferase that utilizes 3'-phospho-5'-adenylyl sulfate (PAPS) as sulfonate donor to catalyze the sulfate conjugation of estradiol and estrone. Is a key enzyme in estrogen homeostasis, the sulfation of estrogens leads to their inactivation. Also sulfates dehydroepiandrosterone (DHEA), pregnenolone, (24S)-hydroxycholesterol and xenobiotic compounds like ethinylestradiol, equalenin, diethyl stilbesterol and 1-naphthol at significantly lower efficiency. Does not sulfonate cortisol, testosterone and dopamine. May play a role in gut microbiota-host metabolic interaction. O-sulfonates 4-ethylphenol (4-EP), a dietary tyrosine-derived metabolite produced by gut bacteria. The product 4-EPS crosses the blood-brain barrier and may negatively regulate oligodendrocyte maturation and myelination, affecting the functional connectivity of different brain regions associated with the limbic system. The protein is Sulfotransferase 1E1 (SULT1E1) of Homo sapiens (Human).